Here is a 219-residue protein sequence, read N- to C-terminus: Probable nicotinate-nucleotide adenylyltransferase (219 aa).

It belongs to the NadD family.

It carries out the reaction nicotinate beta-D-ribonucleotide + ATP + H(+) = deamido-NAD(+) + diphosphate. Its pathway is cofactor biosynthesis; NAD(+) biosynthesis; deamido-NAD(+) from nicotinate D-ribonucleotide: step 1/1. In terms of biological role, catalyzes the reversible adenylation of nicotinate mononucleotide (NaMN) to nicotinic acid adenine dinucleotide (NaAD). The polypeptide is Probable nicotinate-nucleotide adenylyltransferase (Enterococcus faecalis (strain ATCC 700802 / V583)).